Here is an 86-residue protein sequence, read N- to C-terminus: MNTKLWSHSESDDFSRRFVDDFSLDIEVIISSESMLLTIGENKKVTSWIKCSDNFYLGIDAGRNVVHLYLDKLTPSEVESFFEAVG.

In terms of assembly, interacts with the C-terminal fragment (CT) of cognate toxin protein CdiA-EC869.

In terms of biological role, immunity protein component of a toxin-immunity protein module, which functions as a cellular contact-dependent growth inhibition (CDI) system. CDI modules allow bacteria to communicate with and inhibit the growth of closely related neighboring bacteria in a contact-dependent fashion. Neutralizes the toxic activity of cognate toxin CdiA-EC869 (the C-terminal 289 residue CT fragment). Does not inhibit toxic activity of CdiA from other toxin-immunity modules or strains of E.coli. In Escherichia coli O157:H7 (strain EC869), this protein is Immunity protein CdiI-1.